The chain runs to 188 residues: dCTP deaminase (188 aa).

DCTP is bound by residues 111–116 (KSTYAR), 135–137 (TLE), glutamine 156, tyrosine 170, and glutamine 180. The active-site Proton donor/acceptor is glutamate 137.

The protein belongs to the dCTP deaminase family. In terms of assembly, homotrimer.

It carries out the reaction dCTP + H2O + H(+) = dUTP + NH4(+). It functions in the pathway pyrimidine metabolism; dUMP biosynthesis; dUMP from dCTP (dUTP route): step 1/2. In terms of biological role, catalyzes the deamination of dCTP to dUTP. The polypeptide is dCTP deaminase (Cupriavidus metallidurans (strain ATCC 43123 / DSM 2839 / NBRC 102507 / CH34) (Ralstonia metallidurans)).